We begin with the raw amino-acid sequence, 292 residues long: Hemin import ATP-binding protein HmuV (292 aa).

Residues 38 to 271 (LRADGIAVTR…ELLTRVYGHP (234 aa)) form the ABC transporter domain. ATP is bound at residue 70 to 77 (GPNGAGKS).

This sequence belongs to the ABC transporter superfamily. Heme (hemin) importer (TC 3.A.1.14.5) family. The complex is composed of two ATP-binding proteins (HmuV), two transmembrane proteins (HmuU) and a solute-binding protein (HmuT).

The protein resides in the cell membrane. Its function is as follows. Part of the ABC transporter complex HmuTUV involved in hemin import. Responsible for energy coupling to the transport system. This chain is Hemin import ATP-binding protein HmuV, found in Rhodococcus jostii (strain RHA1).